A 356-amino-acid polypeptide reads, in one-letter code: Putative KilA-N domain-containing protein R878 (356 aa).

Positions 1-12 (MKVRKSNNKPLK) are enriched in basic residues. The tract at residues 1-114 (MKVRKSNNKP…DDDGSDNNVY (114 aa)) is disordered. A compositionally biased stretch (low complexity) spans 14–46 (SASFTSGTKTGSKSAKSVNSGSKSMKSTKSSSK). Acidic residues predominate over residues 66–114 (SDNDELSDNEISDNESSDDDEISDNESSDDDEISDNEISDDDGSDNNVY). One can recognise a KilA-N domain in the interval 130–239 (NYSKGKFGNF…VRIGFCMEEW (110 aa)).

The protein is Putative KilA-N domain-containing protein R878 of Acanthamoeba polyphaga (Amoeba).